The primary structure comprises 473 residues: Ribulose bisphosphate carboxylase large chain 1 (473 aa).

Substrate is bound by residues Asn-116 and Thr-166. Lys-168 functions as the Proton acceptor in the catalytic mechanism. Residue Lys-170 participates in substrate binding. Positions 194, 196, and 197 each coordinate Mg(2+). At Lys-194 the chain carries N6-carboxylysine. The active-site Proton acceptor is the His-287. Substrate contacts are provided by Arg-288, His-320, and Ser-372.

This sequence belongs to the RuBisCO large chain family. Type I subfamily. As to quaternary structure, heterohexadecamer of 8 large chains and 8 small chains. Mg(2+) is required as a cofactor.

It catalyses the reaction 2 (2R)-3-phosphoglycerate + 2 H(+) = D-ribulose 1,5-bisphosphate + CO2 + H2O. The enzyme catalyses D-ribulose 1,5-bisphosphate + O2 = 2-phosphoglycolate + (2R)-3-phosphoglycerate + 2 H(+). In terms of biological role, ruBisCO catalyzes two reactions: the carboxylation of D-ribulose 1,5-bisphosphate, the primary event in carbon dioxide fixation, as well as the oxidative fragmentation of the pentose substrate. Both reactions occur simultaneously and in competition at the same active site. The chain is Ribulose bisphosphate carboxylase large chain 1 from Acidithiobacillus ferrooxidans (Thiobacillus ferrooxidans).